Reading from the N-terminus, the 58-residue chain is ATP synthase F(0) complex subunit k, mitochondrial (58 aa).

Lys16 and Lys17 each carry N6-acetyllysine. Residues 23–45 (TLTGRMNCVLATYGGIALLVLYF) form a helical membrane-spanning segment.

As to quaternary structure, component of the ATP synthase complex composed at least of ATP5F1A/subunit alpha, ATP5F1B/subunit beta, ATP5MC1/subunit c (homooctomer), MT-ATP6/subunit a, MT-ATP8/subunit 8, ATP5ME/subunit e, ATP5MF/subunit f, ATP5MG/subunit g, ATP5MK/subunit k, ATP5MJ/subunit j, ATP5F1C/subunit gamma, ATP5F1D/subunit delta, ATP5F1E/subunit epsilon, ATP5PF/subunit F6, ATP5PB/subunit b, ATP5PD/subunit d, ATP5PO/subunit OSCP. ATP synthase complex consists of a soluble F(1) head domain (subunits alpha(3) and beta(3)) - the catalytic core - and a membrane F(0) domain - the membrane proton channel (subunits c, a, 8, e, f, g, k and j). These two domains are linked by a central stalk (subunits gamma, delta, and epsilon) rotating inside the F1 region and a stationary peripheral stalk (subunits F6, b, d, and OSCP). The ATP synthase complex/complex V exists as a monomeric and a dimeric supercomplex that helps shape mitochondrial cristae to optimize proton flow.

The protein resides in the mitochondrion membrane. In terms of biological role, subunit k, of the mitochondrial membrane ATP synthase complex (F(1)F(0) ATP synthase or Complex V) that produces ATP from ADP in the presence of a proton gradient across the membrane which is generated by electron transport complexes of the respiratory chain. ATP synthase complex consist of a soluble F(1) head domain - the catalytic core - and a membrane F(1) domain - the membrane proton channel. These two domains are linked by a central stalk rotating inside the F(1) region and a stationary peripheral stalk. During catalysis, ATP synthesis in the catalytic domain of F(1) is coupled via a rotary mechanism of the central stalk subunits to proton translocation. In vivo, can only synthesize ATP although its ATP hydrolase activity can be activated artificially in vitro. Part of the complex F(0) domain. Required for dimerization of the ATP synthase complex and as such regulates ATP synthesis in the mitochondria. This chain is ATP synthase F(0) complex subunit k, mitochondrial, found in Mus musculus (Mouse).